Reading from the N-terminus, the 180-residue chain is Nucleoplasmin-3 (180 aa).

Residue A2 is modified to N-acetylalanine. S13 and S16 each carry phosphoserine. R27 is modified (omega-N-methylarginine). The segment at 141 to 180 is disordered; it reads TMSNDVSEEESEEEEEEEDSDEEEAELCPILPAKKQGGRP. Over residues 146–166 the composition is skewed to acidic residues; that stretch reads VSEEESEEEEEEEDSDEEEAE. Phosphoserine occurs at positions 147, 151, and 160.

The protein belongs to the nucleoplasmin family. Interacts with NPM (via N-terminus). Forms a pentamer with NPM at a ratio 4:1 (NPM3/NPM). Two pentamers form a decamer. In terms of processing, phosphorylated.

It is found in the nucleus. Its subcellular location is the nucleolus. Functionally, plays a role in the regulation of diverse cellular processes such as ribosome biogenesis, chromatin remodeling or protein chaperoning. Modulates the histone chaperone function and the RNA-binding activity of nucleolar phosphoprotein B23/NPM. Efficiently mediates chromatin remodeling when included in a pentamer containing NPM3 and NPM. This is Nucleoplasmin-3 (NPM3) from Pongo abelii (Sumatran orangutan).